Reading from the N-terminus, the 69-residue chain is uncharacterized protein (69 aa).

This is an uncharacterized protein from Sinorhizobium fredii (strain NBRC 101917 / NGR234).